The sequence spans 141 residues: Large ribosomal subunit protein uL22 (141 aa).

Belongs to the universal ribosomal protein uL22 family. Part of the 50S ribosomal subunit.

Its function is as follows. This protein binds specifically to 23S rRNA; its binding is stimulated by other ribosomal proteins, e.g. L4, L17, and L20. It is important during the early stages of 50S assembly. It makes multiple contacts with different domains of the 23S rRNA in the assembled 50S subunit and ribosome. The globular domain of the protein is located near the polypeptide exit tunnel on the outside of the subunit, while an extended beta-hairpin is found that lines the wall of the exit tunnel in the center of the 70S ribosome. This chain is Large ribosomal subunit protein uL22, found in Frankia alni (strain DSM 45986 / CECT 9034 / ACN14a).